A 382-amino-acid polypeptide reads, in one-letter code: GDP-mannose-dependent alpha-(1-6)-phosphatidylinositol monomannoside mannosyltransferase (382 aa).

Positions 200, 205, 257, and 294 each coordinate GDP-alpha-D-mannose.

This sequence belongs to the glycosyltransferase group 1 family. Glycosyltransferase 4 subfamily.

It carries out the reaction a 1,2-diacyl-sn-glycero-3-phospho-[alpha-D-mannopyranosyl-(1&lt;-&gt;6)-D-myo-inositol] + GDP-alpha-D-mannose = a 2,6-O-bis(alpha-D-mannopyranosyl)-1-phosphatidyl-1D-myo-inositol + GDP + H(+). It catalyses the reaction a 1,2-diacyl-sn-glycero-3-phospho-[alpha-D-6-acyl-mannopyranosyl-(1&lt;-&gt;6)-D-myo-inositol] + GDP-alpha-D-mannose = a 2-O-(alpha-D-mannosyl)-6-O-(6-O-acyl-alpha-D-mannosyl)-1-phosphatidyl-1D-myo-inositol + GDP + H(+). It participates in phospholipid metabolism; phosphatidylinositol metabolism. In terms of biological role, involved in the biosynthesis of phosphatidyl-myo-inositol mannosides (PIM) which are early precursors in the biosynthesis of lipomannans (LM) and lipoarabinomannans (LAM). Catalyzes the addition of a mannosyl residue from GDP-D-mannose (GDP-Man) to the position 6 of a phosphatidyl-myo-inositol bearing an alpha-1,2-linked mannose residue (PIM1) to generate phosphatidyl-myo-inositol bearing alpha-1,2- and alpha-1,6-linked mannose residues (Ac1PIM2). PimB also catalyzes the addition of a mannosyl residue from GDP-Man to the position 6 of phosphatidyl-myo-inositol bearing an acylated alpha-1,2-linked mannose residue (Ac1PIM1) to generate monoacylated phosphatidyl-myo-inositol bearing alpha-1,2- and alpha-1,6-linked mannose residues (Ac1PIM2). The addition of the second mannosyl residue by PimB preferentially occurs before the acylation of the mannosyl residue transferred by PimA. Also able to transfer a mannosyl residue from GDP-Man to the position 6 of a phosphatidyl-myo-inositol (PI), but this reaction is very slow. The protein is GDP-mannose-dependent alpha-(1-6)-phosphatidylinositol monomannoside mannosyltransferase of Mycolicibacterium smegmatis (strain ATCC 700084 / mc(2)155) (Mycobacterium smegmatis).